Consider the following 200-residue polypeptide: Large ribosomal subunit protein uL4 (200 aa).

The interval 38–72 is disordered; sequence GRQGTKQQKTRSDVAGGGKRPWRQKGTGRARAGTT.

This sequence belongs to the universal ribosomal protein uL4 family. In terms of assembly, part of the 50S ribosomal subunit.

In terms of biological role, one of the primary rRNA binding proteins, this protein initially binds near the 5'-end of the 23S rRNA. It is important during the early stages of 50S assembly. It makes multiple contacts with different domains of the 23S rRNA in the assembled 50S subunit and ribosome. Forms part of the polypeptide exit tunnel. This Pseudomonas entomophila (strain L48) protein is Large ribosomal subunit protein uL4.